A 186-amino-acid chain; its full sequence is MYLMKDITRDGNPVLRKRAAKVSFPLSDEDQKLAKDMMKYLEVSQDPELCKKYKLRAGVGLAAPQVGVSKQMAAVLVPAPDEDEKPLFKDVIINPVIVSESVQYGALTEGEGCLSVDKDVPGYVPRHDRITLRYQDVNGETHKVRLKHYPAIVCQHEIDHLHGVLFYDHINKDQPFEAPADTVMIS.

2 residues coordinate Fe cation: cysteine 113 and histidine 156. Residue glutamate 157 is part of the active site. Histidine 160 provides a ligand contact to Fe cation.

This sequence belongs to the polypeptide deformylase family. Requires Fe(2+) as cofactor.

It carries out the reaction N-terminal N-formyl-L-methionyl-[peptide] + H2O = N-terminal L-methionyl-[peptide] + formate. Removes the formyl group from the N-terminal Met of newly synthesized proteins. Requires at least a dipeptide for an efficient rate of reaction. N-terminal L-methionine is a prerequisite for activity but the enzyme has broad specificity at other positions. The chain is Peptide deformylase from Limosilactobacillus reuteri (strain DSM 20016) (Lactobacillus reuteri).